The chain runs to 282 residues: Fused uL13/uS9 ribosomal subunit protein (282 aa).

The tract at residues 1-141 (MLLMIINGEG…LGEISELLGA (141 aa)) is large ribosomal subunit protein uL13. Positions 150-282 (MKKVIHTSGK…ARARRQKSYR (133 aa)) are small ribosomal subunit protein uS9. A disordered region spans residues 259 to 282 (DPRRSEPKKYGGRGARARRQKSYR). The span at 273-282 (ARARRQKSYR) shows a compositional bias: basic residues.

In the N-terminal section; belongs to the universal ribosomal protein uL13 family. The protein in the C-terminal section; belongs to the universal ribosomal protein uS9 family. In terms of assembly, L13 is part of the 50S ribosomal subunit. S9 is part of the 30S ribosomal subunit.

In terms of biological role, L13 protein is one of the early assembly proteins of the 50S ribosomal subunit, although it is not seen to bind rRNA by itself. It is important during the early stages of 50S assembly. The polypeptide is Fused uL13/uS9 ribosomal subunit protein (rpl13/rps9) (Methanothermobacter thermautotrophicus (strain ATCC 29096 / DSM 1053 / JCM 10044 / NBRC 100330 / Delta H) (Methanobacterium thermoautotrophicum)).